The chain runs to 409 residues: CUB domain-containing protein (409 aa).

The signal sequence occupies residues 1–18 (MFLFSLTVLSALVLITES). A compositionally biased stretch (low complexity) spans 154-229 (TEASTTAQET…TTAPTTAPAP (76 aa)). A disordered region spans residues 154–230 (TEASTTAQET…TAPTTAPAPI (77 aa)). C232 and C257 are disulfide-bonded. Residues 232 to 338 (CGGVLRGRGT…QEYVDYYYYD (107 aa)) enclose the CUB domain. A disordered region spans residues 389-409 (VQGAADSESEASASSESSDED). Over residues 392–409 (AADSESEASASSESSDED) the composition is skewed to low complexity.

Component of the acid-insoluble and acid-soluble organic matrix of the aragonitic skeleton (at protein level).

The protein resides in the secreted. This Acropora millepora (Staghorn coral) protein is CUB domain-containing protein.